We begin with the raw amino-acid sequence, 658 residues long: UvrABC system protein B (658 aa).

One can recognise a Helicase ATP-binding domain in the interval 25-178 (KSLKNNNHYQ…KNFLLKLVEM (154 aa)). An ATP-binding site is contributed by 38–45 (GVTGSGKT). The short motif at 91–114 (HFDYYQPESYIPRRDLFIEKDSSI) is the Beta-hairpin element. A Helicase C-terminal domain is found at 433–607 (QVQDLFDEIK…ELKLRDDEIR (175 aa)). The region spanning 623–658 (EKIIKELDKKMRECAKNLDFEEAMRLRDEIAKLRTL) is the UVR domain.

It belongs to the UvrB family. In terms of assembly, forms a heterotetramer with UvrA during the search for lesions. Interacts with UvrC in an incision complex.

Its subcellular location is the cytoplasm. Its function is as follows. The UvrABC repair system catalyzes the recognition and processing of DNA lesions. A damage recognition complex composed of 2 UvrA and 2 UvrB subunits scans DNA for abnormalities. Upon binding of the UvrA(2)B(2) complex to a putative damaged site, the DNA wraps around one UvrB monomer. DNA wrap is dependent on ATP binding by UvrB and probably causes local melting of the DNA helix, facilitating insertion of UvrB beta-hairpin between the DNA strands. Then UvrB probes one DNA strand for the presence of a lesion. If a lesion is found the UvrA subunits dissociate and the UvrB-DNA preincision complex is formed. This complex is subsequently bound by UvrC and the second UvrB is released. If no lesion is found, the DNA wraps around the other UvrB subunit that will check the other stand for damage. The chain is UvrABC system protein B from Helicobacter pylori (strain HPAG1).